The primary structure comprises 545 residues: Membrane protein insertase YidC (545 aa).

The chain crosses the membrane as a helical span at residues 6 to 26 (NILLIGLLFVSFLLWQQWQAD). The tract at residues 44 to 65 (STVADAHSSDVPDADSAVPEAT) is disordered. The next 4 membrane-spanning stretches (helical) occupy residues 346-366 (LLMF…LITL), 424-444 (GGCL…WVLL), 461-481 (LSVQ…MFVM), and 504-524 (VIFT…WLVG).

The protein belongs to the OXA1/ALB3/YidC family. Type 1 subfamily. Interacts with the Sec translocase complex via SecD. Specifically interacts with transmembrane segments of nascent integral membrane proteins during membrane integration.

The protein localises to the cell inner membrane. Required for the insertion and/or proper folding and/or complex formation of integral membrane proteins into the membrane. Involved in integration of membrane proteins that insert both dependently and independently of the Sec translocase complex, as well as at least some lipoproteins. Aids folding of multispanning membrane proteins. This is Membrane protein insertase YidC from Shewanella pealeana (strain ATCC 700345 / ANG-SQ1).